The chain runs to 194 residues: Large ribosomal subunit protein uL6m (194 aa).

Belongs to the universal ribosomal protein uL6 family.

The protein resides in the mitochondrion. In Prototheca wickerhamii, this protein is Large ribosomal subunit protein uL6m (RPL6).